A 492-amino-acid chain; its full sequence is Glycylpeptide N-tetradecanoyltransferase (492 aa).

Positions 1–22 are enriched in basic and acidic residues; the sequence is MSDSKDRKGKAPEGQSSEKKDG. The disordered stretch occupies residues 1 to 45; the sequence is MSDSKDRKGKAPEGQSSEKKDGAVNITPQMAESLLENNPALRNET. Tetradecanoyl-CoA-binding positions include 82–85, 215–217, and 223–227; these read YKFW, LCI, and SKRLT. The active-site Proton acceptor; via carboxylate is the leucine 492.

Belongs to the NMT family. As to quaternary structure, monomer.

The protein resides in the cytoplasm. The catalysed reaction is N-terminal glycyl-[protein] + tetradecanoyl-CoA = N-tetradecanoylglycyl-[protein] + CoA + H(+). Functionally, adds a myristoyl group to the N-terminal glycine residue of certain cellular proteins. This Aspergillus fumigatus (strain ATCC MYA-4609 / CBS 101355 / FGSC A1100 / Af293) (Neosartorya fumigata) protein is Glycylpeptide N-tetradecanoyltransferase (nmt1).